The sequence spans 339 residues: Cyclin-Y-like protein 1 (339 aa).

One can recognise a Cyclin N-terminal domain in the interval 181 to 263 (QLTAECAIVT…FLELLQFNIN (83 aa)).

This sequence belongs to the cyclin family. Cyclin Y subfamily.

The protein localises to the cell membrane. Functionally, key regulator of Wnt signaling implicated in various biological processes such as embryonic neurogenesis. The sequence is that of Cyclin-Y-like protein 1 (ccnyl1) from Danio rerio (Zebrafish).